We begin with the raw amino-acid sequence, 336 residues long: Transcription initiation factor IIB (336 aa).

A TFIIB-type zinc finger spans residues 41-72 (QKLRCPICGNTVFIEDAERGQIVCASCGYVLM). Residues Cys-45, Cys-48, Cys-64, and Cys-67 each coordinate Zn(2+). Tandem repeats lie at residues 152-235 (HELN…AREL) and 246-327 (QYVP…ELAK).

Belongs to the TFIIB family.

Functionally, stabilizes TBP binding to an archaeal box-A promoter. Also responsible for recruiting RNA polymerase II to the pre-initiation complex (DNA-TBP-TFIIB). In Caldivirga maquilingensis (strain ATCC 700844 / DSM 13496 / JCM 10307 / IC-167), this protein is Transcription initiation factor IIB.